Reading from the N-terminus, the 447-residue chain is UDP-N-acetylmuramate--L-alanine ligase (447 aa).

108–114 (GSHGKTS) is a binding site for ATP.

Belongs to the MurCDEF family.

The protein resides in the cytoplasm. The enzyme catalyses UDP-N-acetyl-alpha-D-muramate + L-alanine + ATP = UDP-N-acetyl-alpha-D-muramoyl-L-alanine + ADP + phosphate + H(+). The protein operates within cell wall biogenesis; peptidoglycan biosynthesis. Cell wall formation. The chain is UDP-N-acetylmuramate--L-alanine ligase from Listeria monocytogenes serovar 1/2a (strain ATCC BAA-679 / EGD-e).